The chain runs to 267 residues: tRNA pseudouridine synthase A (267 aa).

Residue Asp-51 is the Nucleophile of the active site. Residue Tyr-109 participates in substrate binding.

This sequence belongs to the tRNA pseudouridine synthase TruA family.

It catalyses the reaction uridine(38/39/40) in tRNA = pseudouridine(38/39/40) in tRNA. Its function is as follows. Formation of pseudouridine at positions 38, 39 and 40 in the anticodon stem and loop of transfer RNAs. This Methanothrix thermoacetophila (strain DSM 6194 / JCM 14653 / NBRC 101360 / PT) (Methanosaeta thermophila) protein is tRNA pseudouridine synthase A.